The chain runs to 1195 residues: MSARYAEIGVTTNFSFLEGGSHPQDYVHEASRLGLDAIGIADRNTLAGVVRAFSEFDNEELIHKPKLLIGTRLCFADGTPDLLAYPTDRAAYGRLCRLLSAGKLRAGKGECHLTFADLEAFIHERSPSIHELATVIHPPSASINQPSASIHQFPTPSWPGLTRPSTPTSKVVLVSVDARVKPGHDGGKRVADNSQILLVVMPSYRFQTKTIAIALERLTALNADAVWLGLTPYYRGDDKRRLARLRRIAAVARVPCIATNDVLYHHPRRRALQDVLTCVREKTSIDKAGRRLEGNAERHLKPAAEMARLFRHDPEAIAETLRFADRISFTLDELKYHYPDEPVPPGKTAQAHLQDLTEQGIKQYFPNGISDRLRATIAKELAIIERRGYAHYFLTVHDIVRYARSQDILCQGRGSAANSAVCYVLGITCVDPTEIDLLFERFVSEERDEPPDIDVDFEHSRREEVMQYIYRRYGRHRAAIVATVIHYRPRSAIRDVGKALGLSEDVTAALADTVWGSWGKGLNEMQVRQAGLDPHNPMIGRAVELATELIGFPRHLSQHVGGYVLTQDRLDSYVPIGNAAMADRTFIEWDKDDIDAVKMMKVDVLALGMLTCIRKGFHLIAQHKGVRFQLSDIKSEDDNAVYKMLQRGESIGVFQVESRAQMNMLPRLKPRCFYDLVIEVAIVRPGPIQGDMVHPYLRRRNGQEPVVYPSPSGEAGDKNELRQILGKTLGVPLFQEQAMRIAIEAAHFTPDEANQLRRAMATFRNVGTIGKFEAKMIGNLVKRGYDATFAKNCFEQIKGFGSYGFPESHAASFAKLVYVSAWMKCEHPDAFCCALLNSQPMGFYAPAQIVGDARSNGVEVRPVDVSFSEGQCTLEERCGRHHAVRLGFRMIDGFRWADPDEERVQLEAGEPPSDDWAARIVAARARGAFTSLEQFARITALPKRALILLADADAFRSLGLDRRAALWAVRRLPDDVPLPLFEAASAREQEDERAAPLPAMPMAEHVVADYQTVRLSLKGHPMEFLRALFAAERVVTCREVSRSEQRASGCWLRCAGVVLVRQRPGSANGVIFMTIEDETGIANIVVWPAVMEKYRKEVMGARLVLVEGKVQASAEGVVHLVAERLIDRSAEMGRLAEGLVRPALPDGADLYEPLTSEKYNYEALNGDRRDTPDAPAQRHRHPRDVRILPPSRDFH.

The disordered stretch occupies residues 1163-1195 (ALNGDRRDTPDAPAQRHRHPRDVRILPPSRDFH).

This sequence belongs to the DNA polymerase type-C family. DnaE2 subfamily.

The protein localises to the cytoplasm. The enzyme catalyses DNA(n) + a 2'-deoxyribonucleoside 5'-triphosphate = DNA(n+1) + diphosphate. Functionally, DNA polymerase involved in damage-induced mutagenesis and translesion synthesis (TLS). It is not the major replicative DNA polymerase. This is Error-prone DNA polymerase from Rhodopseudomonas palustris (strain ATCC BAA-98 / CGA009).